The sequence spans 441 residues: ATP-dependent protease ATPase subunit HslU (441 aa).

Residues I18, 60–65, D254, E319, and R391 each bind ATP; that span reads GVGKTE.

This sequence belongs to the ClpX chaperone family. HslU subfamily. In terms of assembly, a double ring-shaped homohexamer of HslV is capped on each side by a ring-shaped HslU homohexamer. The assembly of the HslU/HslV complex is dependent on binding of ATP.

Its subcellular location is the cytoplasm. In terms of biological role, ATPase subunit of a proteasome-like degradation complex; this subunit has chaperone activity. The binding of ATP and its subsequent hydrolysis by HslU are essential for unfolding of protein substrates subsequently hydrolyzed by HslV. HslU recognizes the N-terminal part of its protein substrates and unfolds these before they are guided to HslV for hydrolysis. The sequence is that of ATP-dependent protease ATPase subunit HslU from Shewanella woodyi (strain ATCC 51908 / MS32).